Reading from the N-terminus, the 278-residue chain is Cytoplasmic envelopment protein 1 (278 aa).

Belongs to the herpesviridae cytoplasmic envelopment protein 1 family. As to quaternary structure, interacts with BSRF1 tegument protein; the BBRF2-BSRF1 complexes oligomerize and might play a role in tethering the viral nucleocapsids to the host Golgi membrane during secondary envelopment.

It localises to the virion. It is found in the virion tegument. The protein resides in the host cytoplasm. The protein localises to the host Golgi apparatus. Plays a critical role in cytoplasmic virus egress. Participates in the final step of tegumentation and envelope acquisition within the host cytoplasm. The sequence is that of Cytoplasmic envelopment protein 1 from Homo sapiens (Human).